Consider the following 83-residue polypeptide: SFNYKTFFKLAAKSNDDVKKAFFVIDQDKSGFIEEDELKLFLQNFSAGARALTAGETKTFLAAGDSDGDGMIGVDEFQALVKA.

2 EF-hand domains span residues 13–48 (KSND…FSAG) and 52–83 (LTAG…LVKA). D26, D28, S30, F32, E34, E37, D65, D67, D69, M71, and E76 together coordinate Ca(2+).

It belongs to the parvalbumin family.

In muscle, parvalbumin is thought to be involved in relaxation after contraction. It binds two calcium ions. The polypeptide is Parvalbumin beta 3 (Macruronus novaezelandiae (Blue grenadier)).